An 821-amino-acid chain; its full sequence is Putative outer membrane usher protein YqiG (821 aa).

The N-terminal stretch at 1 to 20 is a signal peptide; that stretch reads MSGNIGANPVIIIGCASAYA. C798 and C817 are disulfide-bonded.

This sequence belongs to the fimbrial export usher family.

The protein resides in the cell outer membrane. May be involved in H(2) production during fermentative growth. Involved in the export and assembly of a fimbrial subunit across the outer membrane. In Escherichia coli (strain K12), this protein is Putative outer membrane usher protein YqiG (yqiG).